Here is a 474-residue protein sequence, read N- to C-terminus: tRNA-2-methylthio-N(6)-dimethylallyladenosine synthase (474 aa).

One can recognise an MTTase N-terminal domain in the interval 3–120 (KKLHIKTWGC…LPEMINSVRG (118 aa)). Positions 12, 49, 83, 157, 161, and 164 each coordinate [4Fe-4S] cluster. A Radical SAM core domain is found at 143-375 (RAEGPTAFVS…QERINQQAMA (233 aa)). The region spanning 378–441 (RRMLGTVQRI…TNSLRGKVVR (64 aa)) is the TRAM domain.

This sequence belongs to the methylthiotransferase family. MiaB subfamily. In terms of assembly, monomer. Requires [4Fe-4S] cluster as cofactor.

Its subcellular location is the cytoplasm. The enzyme catalyses N(6)-dimethylallyladenosine(37) in tRNA + (sulfur carrier)-SH + AH2 + 2 S-adenosyl-L-methionine = 2-methylsulfanyl-N(6)-dimethylallyladenosine(37) in tRNA + (sulfur carrier)-H + 5'-deoxyadenosine + L-methionine + A + S-adenosyl-L-homocysteine + 2 H(+). Its function is as follows. Catalyzes the methylthiolation of N6-(dimethylallyl)adenosine (i(6)A), leading to the formation of 2-methylthio-N6-(dimethylallyl)adenosine (ms(2)i(6)A) at position 37 in tRNAs that read codons beginning with uridine. This Citrobacter koseri (strain ATCC BAA-895 / CDC 4225-83 / SGSC4696) protein is tRNA-2-methylthio-N(6)-dimethylallyladenosine synthase.